The primary structure comprises 106 residues: MVIRGAVYRVDFGDAKRGHEQRGRRYAVVISPGSMPWSVVTVVPTSTSAQPAVFRPELEVMGTKTRFLVDQIRTIGIVYVHGDPVDYLDRDQMAKVEHAVARYLGL.

It belongs to the PemK/MazF family. In terms of assembly, forms a complex with cognate antitoxin Rv3098B/RVBD_3098B.

Functionally, putative toxic component of a possible type II toxin-antitoxin (TA) system. Its toxic effect may be neutralized by cognate antitoxin Rv3098B/RVBD_3098B. This is Putative toxin Rv3098A/RVBD_3098A from Mycobacterium tuberculosis (strain ATCC 25618 / H37Rv).